The primary structure comprises 246 residues: Auxin-responsive protein IAA25 (246 aa).

The interval 1-22 (MKSSSVAPRLKQERQDDCKFQE) is disordered. Basic and acidic residues predominate over residues 10–22 (LKQERQDDCKFQE). Residues 28–32 (LELRL) carry the EAR-like (transcriptional repression) motif. The PB1 domain occupies 143–238 (TMFVKVNLEG…SVKRLYIAQD (96 aa)).

Belongs to the Aux/IAA family. Homodimers and heterodimers. Highly expressed in flowers. Expressed in roots and seedlings.

Its subcellular location is the nucleus. Aux/IAA proteins are short-lived transcriptional factors that function as repressors of early auxin response genes at low auxin concentrations. This Oryza sativa subsp. japonica (Rice) protein is Auxin-responsive protein IAA25 (IAA25).